A 53-amino-acid polypeptide reads, in one-letter code: UPF0391 membrane protein msr4317 (53 aa).

2 helical membrane-spanning segments follow: residues Trp4 to Ala24 and Ile33 to Thr53.

Belongs to the UPF0391 family.

The protein localises to the cell membrane. In Mesorhizobium japonicum (strain LMG 29417 / CECT 9101 / MAFF 303099) (Mesorhizobium loti (strain MAFF 303099)), this protein is UPF0391 membrane protein msr4317.